A 400-amino-acid polypeptide reads, in one-letter code: Formate-dependent phosphoribosylglycinamide formyltransferase (400 aa).

Residues 22–23 (EL) and Glu82 contribute to the N(1)-(5-phospho-beta-D-ribosyl)glycinamide site. Residues Arg115, Lys157, 162-167 (SSGKGQ), 197-200 (EGFV), and Glu205 each bind ATP. In terms of domain architecture, ATP-grasp spans 120 to 315 (RLAAETLGVP…EFELHARAIL (196 aa)). Positions 274 and 286 each coordinate Mg(2+). N(1)-(5-phospho-beta-D-ribosyl)glycinamide is bound by residues Asp293, Lys362, and 369 to 370 (RR).

The protein belongs to the PurK/PurT family. As to quaternary structure, homodimer.

It carries out the reaction N(1)-(5-phospho-beta-D-ribosyl)glycinamide + formate + ATP = N(2)-formyl-N(1)-(5-phospho-beta-D-ribosyl)glycinamide + ADP + phosphate + H(+). It functions in the pathway purine metabolism; IMP biosynthesis via de novo pathway; N(2)-formyl-N(1)-(5-phospho-D-ribosyl)glycinamide from N(1)-(5-phospho-D-ribosyl)glycinamide (formate route): step 1/1. In terms of biological role, involved in the de novo purine biosynthesis. Catalyzes the transfer of formate to 5-phospho-ribosyl-glycinamide (GAR), producing 5-phospho-ribosyl-N-formylglycinamide (FGAR). Formate is provided by PurU via hydrolysis of 10-formyl-tetrahydrofolate. The protein is Formate-dependent phosphoribosylglycinamide formyltransferase of Mycolicibacterium smegmatis (strain ATCC 700084 / mc(2)155) (Mycobacterium smegmatis).